A 1295-amino-acid polypeptide reads, in one-letter code: Phosphoribosylformylglycinamidine synthase (1295 aa).

A disordered region spans residues 305 to 327 (WPGAATGSGGEIRDEGATGRGAK). ATP-binding positions include 307 to 318 (GAATGSGGEIRD) and A678. Residues E718, N722, and D884 each contribute to the Mg(2+) site. ATP is bound at residue S886. The Glutamine amidotransferase type-1 domain maps to 1042–1295 (VAVLREQGVN…IFRNARKQLG (254 aa)). The active-site Nucleophile is C1135. Active-site residues include H1260 and E1262.

It in the N-terminal section; belongs to the FGAMS family. In terms of assembly, monomer.

It is found in the cytoplasm. It catalyses the reaction N(2)-formyl-N(1)-(5-phospho-beta-D-ribosyl)glycinamide + L-glutamine + ATP + H2O = 2-formamido-N(1)-(5-O-phospho-beta-D-ribosyl)acetamidine + L-glutamate + ADP + phosphate + H(+). It participates in purine metabolism; IMP biosynthesis via de novo pathway; 5-amino-1-(5-phospho-D-ribosyl)imidazole from N(2)-formyl-N(1)-(5-phospho-D-ribosyl)glycinamide: step 1/2. Its function is as follows. Phosphoribosylformylglycinamidine synthase involved in the purines biosynthetic pathway. Catalyzes the ATP-dependent conversion of formylglycinamide ribonucleotide (FGAR) and glutamine to yield formylglycinamidine ribonucleotide (FGAM) and glutamate. The chain is Phosphoribosylformylglycinamidine synthase from Escherichia coli (strain UTI89 / UPEC).